The sequence spans 317 residues: Melanocyte-stimulating hormone receptor (317 aa).

At 1–37 (MPVQGSQRRLLGSLNSTPTATPHLGLAANQTGARCLE) the chain is on the extracellular side. Residue Asn-29 is glycosylated (N-linked (GlcNAc...) asparagine). Residues 38–63 (VSIPDGLFLSLGLVSLVENVLVVTAI) traverse the membrane as a helical segment. Residues 64 to 72 (AKNRNLHSP) are Cytoplasmic-facing. A helical transmembrane segment spans residues 73–93 (MYCFICCLALSDLLVSGSNML). Residues 94–118 (ETAVILLLEAGALAARAAVVQQLDN) lie on the Extracellular side of the membrane. A helical membrane pass occupies residues 119–140 (VIDVITCSSMLSSLCFLGAIAV). Residues 141 to 163 (DRYISIFYALRYHSIVTLPRARR) are Cytoplasmic-facing. Residues 164-183 (AVAAIWVASVLFSMLFIAYY) form a helical membrane-spanning segment. The Extracellular segment spans residues 184-191 (DHAAVLLC). A helical membrane pass occupies residues 192-211 (LVVFFLAMLVLMAVLYVHML). Over 212–240 (ARACQHAQGIARLHKRQCPAHQGFGLKGA) the chain is Cytoplasmic. The chain crosses the membrane as a helical span at residues 241–266 (ATLTILLGIFFLCWGPFFLHLTLIVL). Residues 267–279 (CPQHPTCSCIFKN) are Extracellular-facing. The chain crosses the membrane as a helical span at residues 280–300 (FNLFLALIICNAIIDPLIYAF). Topologically, residues 301–317 (RSQELRRTLKEVLLCSW) are cytoplasmic. A lipid anchor (S-palmitoyl cysteine) is attached at Cys-315.

The protein belongs to the G-protein coupled receptor 1 family. Interacts with MGRN1, but does not undergo MGRN1-mediated ubiquitination; this interaction competes with GNAS-binding and thus inhibits agonist-induced cAMP production. Interacts with OPN3; the interaction results in a decrease in MC1R-mediated cAMP signaling and ultimately a decrease in melanin production in melanocytes.

The protein resides in the cell membrane. Functionally, receptor for MSH (alpha, beta and gamma) and ACTH. The activity of this receptor is mediated by G proteins which activate adenylate cyclase. Mediates melanogenesis, the production of eumelanin (black/brown) and phaeomelanin (red/yellow), via regulation of cAMP signaling in melanocytes. The protein is Melanocyte-stimulating hormone receptor (MC1R) of Chlorocebus aethiops (Green monkey).